The following is a 69-amino-acid chain: Guanine nucleotide-binding protein G(I)/G(S)/G(O) subunit gamma-T2 (69 aa).

At Cys66 the chain carries Cysteine methyl ester. Residue Cys66 is the site of S-farnesyl cysteine attachment. Positions 67–69 are cleaved as a propeptide — removed in mature form; that stretch reads LIS.

It belongs to the G protein gamma family. In terms of assembly, g proteins are composed of 3 units, alpha, beta and gamma. As to expression, retinal cones.

It localises to the cell membrane. Guanine nucleotide-binding proteins (G proteins) are involved as a modulator or transducer in various transmembrane signaling systems. The beta and gamma chains are required for the GTPase activity, for replacement of GDP by GTP, and for G protein-effector interaction. This chain is Guanine nucleotide-binding protein G(I)/G(S)/G(O) subunit gamma-T2 (GNGT2), found in Homo sapiens (Human).